Reading from the N-terminus, the 339-residue chain is Methylcobamide:CoM methyltransferase MtaA (339 aa).

Residues histidine 237, cysteine 239, and cysteine 316 each coordinate Zn(2+).

This sequence belongs to the uroporphyrinogen decarboxylase family. MtbA/mtaA subfamily. Requires Zn(2+) as cofactor.

It carries out the reaction methyl-Co(III)-[methanol-specific corrinoid protein] + coenzyme M = Co(I)-[methanol-specific corrinoid protein] + methyl-coenzyme M + H(+). In terms of biological role, methyltransferase involved in methanogenesis in the methanol pathway. Catalyzes the transfer of the methyl group from the methylated corrinoid protein MtaC to coenzyme M, forming the substrate for coenzyme-B sulfoethylthiotransferase. MtaC can be substituted by free cob(I)alamin in vitro. The protein is Methylcobamide:CoM methyltransferase MtaA (mtaA) of Methanosarcina barkeri (strain Fusaro / DSM 804).